The chain runs to 715 residues: Polyribonucleotide nucleotidyltransferase (715 aa).

Positions 491 and 497 each coordinate Mg(2+). Residues 558-617 (PKIMTMTINPEKIRDVIGPQGRVINKIIEETGVKIDIEQDGRVFIASINHEANLRAKQII) form the KH domain. The region spanning 627-695 (GQVYLGTVKR…DQGRVNLSRK (69 aa)) is the S1 motif domain.

Belongs to the polyribonucleotide nucleotidyltransferase family. The cofactor is Mg(2+).

It localises to the cytoplasm. The enzyme catalyses RNA(n+1) + phosphate = RNA(n) + a ribonucleoside 5'-diphosphate. Its function is as follows. Involved in mRNA degradation. Catalyzes the phosphorolysis of single-stranded polyribonucleotides processively in the 3'- to 5'-direction. This is Polyribonucleotide nucleotidyltransferase from Brevibacillus brevis (strain 47 / JCM 6285 / NBRC 100599).